Reading from the N-terminus, the 332-residue chain is Ketol-acid reductoisomerase (NAD(+)) (332 aa).

Positions Met1–Cys186 constitute a KARI N-terminal Rossmann domain. NAD(+) is bound by residues Tyr24–Gln27, Glu46, Asn55, Ser57, and Asp87–Gln90. His112 is a catalytic residue. Gly138 lines the NAD(+) pocket. Positions Thr187 to Lys332 constitute a KARI C-terminal knotted domain. Residues Asp195, Glu199, Glu231, and Glu235 each contribute to the Mg(2+) site. Residue Ser256 participates in substrate binding.

Belongs to the ketol-acid reductoisomerase family. Homodimer. It depends on Mg(2+) as a cofactor.

The enzyme catalyses (2R)-2,3-dihydroxy-3-methylbutanoate + NAD(+) = (2S)-2-acetolactate + NADH + H(+). Its pathway is amino-acid biosynthesis; L-isoleucine biosynthesis; L-isoleucine from 2-oxobutanoate: step 2/4. It participates in amino-acid biosynthesis; L-valine biosynthesis; L-valine from pyruvate: step 2/4. Its function is as follows. Involved in the biosynthesis of branched-chain amino acids (BCAA). Catalyzes an alkyl-migration followed by a ketol-acid reduction of (S)-2-acetolactate (S2AL) to yield (R)-2,3-dihydroxy-isovalerate. In the isomerase reaction, S2AL is rearranged via a Mg-dependent methyl migration to produce 3-hydroxy-3-methyl-2-ketobutyrate (HMKB). In the reductase reaction, this 2-ketoacid undergoes a metal-dependent reduction by NADH to yield (R)-2,3-dihydroxy-isovalerate. In Uncultured archaeon GZfos26G2, this protein is Ketol-acid reductoisomerase (NAD(+)).